Consider the following 255-residue polypeptide: NAD kinase (255 aa).

Asp-44 serves as the catalytic Proton acceptor. NAD(+)-binding positions include 44–45 (DG), His-49, 114–115 (NE), Asp-144, Ala-152, 155–160 (SAYNLS), and Gln-216.

Belongs to the NAD kinase family. A divalent metal cation is required as a cofactor.

The protein localises to the cytoplasm. It catalyses the reaction NAD(+) + ATP = ADP + NADP(+) + H(+). Involved in the regulation of the intracellular balance of NAD and NADP, and is a key enzyme in the biosynthesis of NADP. Catalyzes specifically the phosphorylation on 2'-hydroxyl of the adenosine moiety of NAD to yield NADP. This chain is NAD kinase, found in Rickettsia peacockii (strain Rustic).